A 394-amino-acid polypeptide reads, in one-letter code: Elongation factor Tu (394 aa).

Positions 10–205 (KPHVNIGTIG…VDNWIPLPPR (196 aa)) constitute a tr-type G domain. The interval 19–26 (GHVDHGKT) is G1. Position 19–26 (19–26 (GHVDHGKT)) interacts with GTP. Residue threonine 26 participates in Mg(2+) binding. Residues 60–64 (GITIN) form a G2 region. The G3 stretch occupies residues 81-84 (DCPG). Residues 81–85 (DCPGH) and 136–139 (NKCD) contribute to the GTP site. Residues 136–139 (NKCD) are G4. The interval 174-176 (SAL) is G5.

This sequence belongs to the TRAFAC class translation factor GTPase superfamily. Classic translation factor GTPase family. EF-Tu/EF-1A subfamily. As to quaternary structure, monomer.

The protein localises to the cytoplasm. It catalyses the reaction GTP + H2O = GDP + phosphate + H(+). In terms of biological role, GTP hydrolase that promotes the GTP-dependent binding of aminoacyl-tRNA to the A-site of ribosomes during protein biosynthesis. This is Elongation factor Tu from Bacteroides thetaiotaomicron (strain ATCC 29148 / DSM 2079 / JCM 5827 / CCUG 10774 / NCTC 10582 / VPI-5482 / E50).